A 466-amino-acid polypeptide reads, in one-letter code: UDP-N-acetylmuramoylalanine--D-glutamate ligase (466 aa).

Glycine 128–threonine 134 serves as a coordination point for ATP.

The protein belongs to the MurCDEF family.

Its subcellular location is the cytoplasm. It catalyses the reaction UDP-N-acetyl-alpha-D-muramoyl-L-alanine + D-glutamate + ATP = UDP-N-acetyl-alpha-D-muramoyl-L-alanyl-D-glutamate + ADP + phosphate + H(+). The protein operates within cell wall biogenesis; peptidoglycan biosynthesis. In terms of biological role, cell wall formation. Catalyzes the addition of glutamate to the nucleotide precursor UDP-N-acetylmuramoyl-L-alanine (UMA). This Bartonella henselae (strain ATCC 49882 / DSM 28221 / CCUG 30454 / Houston 1) (Rochalimaea henselae) protein is UDP-N-acetylmuramoylalanine--D-glutamate ligase.